Consider the following 421-residue polypeptide: Replication factor C large subunit (421 aa).

63 to 70 contacts ATP; it reads GPPGIGKT.

Belongs to the activator 1 small subunits family. RfcL subfamily. As to quaternary structure, heteromultimer composed of small subunits (RfcS) and large subunits (RfcL).

Part of the RFC clamp loader complex which loads the PCNA sliding clamp onto DNA. The chain is Replication factor C large subunit from Pyrobaculum calidifontis (strain DSM 21063 / JCM 11548 / VA1).